The primary structure comprises 253 residues: 5'/3'-nucleotidase SurE (253 aa).

Residues D8, D9, S39, and N92 each coordinate a divalent metal cation.

This sequence belongs to the SurE nucleotidase family. A divalent metal cation is required as a cofactor.

Its subcellular location is the cytoplasm. The catalysed reaction is a ribonucleoside 5'-phosphate + H2O = a ribonucleoside + phosphate. It carries out the reaction a ribonucleoside 3'-phosphate + H2O = a ribonucleoside + phosphate. It catalyses the reaction [phosphate](n) + H2O = [phosphate](n-1) + phosphate + H(+). Functionally, nucleotidase with a broad substrate specificity as it can dephosphorylate various ribo- and deoxyribonucleoside 5'-monophosphates and ribonucleoside 3'-monophosphates with highest affinity to 3'-AMP. Also hydrolyzes polyphosphate (exopolyphosphatase activity) with the preference for short-chain-length substrates (P20-25). Might be involved in the regulation of dNTP and NTP pools, and in the turnover of 3'-mononucleotides produced by numerous intracellular RNases (T1, T2, and F) during the degradation of various RNAs. In Shigella dysenteriae serotype 1 (strain Sd197), this protein is 5'/3'-nucleotidase SurE.